The chain runs to 257 residues: Alkaline phosphatase synthesis transcriptional regulatory protein SphR (257 aa).

A Response regulatory domain is found at 25–148 (RILVVEDEAV…ELVARCRALL (124 aa)). The residue at position 83 (Asp83) is a 4-aspartylphosphate. Residues 159–257 (PAVLRYEGLK…TVRGFGYRLG (99 aa)) constitute a DNA-binding region (ompR/PhoB-type).

In terms of processing, phosphorylated by SphS.

Its function is as follows. Member of the two-component regulatory system SphR/SphS. Response regulator. Involved in inducible production of alkaline phosphatase in response to phosphate limitation as it is directly involved in the regulation of phoA transcription in response to phosphate limitation. Binds to two distinct sites upstream from the phoA promoter. In Synechococcus elongatus (strain ATCC 33912 / PCC 7942 / FACHB-805) (Anacystis nidulans R2), this protein is Alkaline phosphatase synthesis transcriptional regulatory protein SphR (sphR).